A 219-amino-acid chain; its full sequence is ATP-dependent dethiobiotin synthetase BioD (219 aa).

Residue 14 to 19 (DVGKTY) coordinates ATP. Thr-18 contributes to the Mg(2+) binding site. Lys-37 is a catalytic residue. Ser-41 contacts substrate. Residues Asp-54, 114 to 117 (EGAG), and 175 to 176 (NN) each bind ATP. Positions 54 and 114 each coordinate Mg(2+).

The protein belongs to the dethiobiotin synthetase family. In terms of assembly, homodimer. Requires Mg(2+) as cofactor.

Its subcellular location is the cytoplasm. The enzyme catalyses (7R,8S)-7,8-diammoniononanoate + CO2 + ATP = (4R,5S)-dethiobiotin + ADP + phosphate + 3 H(+). Its pathway is cofactor biosynthesis; biotin biosynthesis; biotin from 7,8-diaminononanoate: step 1/2. In terms of biological role, catalyzes a mechanistically unusual reaction, the ATP-dependent insertion of CO2 between the N7 and N8 nitrogen atoms of 7,8-diaminopelargonic acid (DAPA, also called 7,8-diammoniononanoate) to form a ureido ring. This is ATP-dependent dethiobiotin synthetase BioD from Fusobacterium nucleatum subsp. nucleatum (strain ATCC 25586 / DSM 15643 / BCRC 10681 / CIP 101130 / JCM 8532 / KCTC 2640 / LMG 13131 / VPI 4355).